The chain runs to 544 residues: Protein kinase dsk1 (544 aa).

In terms of domain architecture, Protein kinase spans 81–516 (YVVERKLGWG…AGYMSNSPWL (436 aa)). ATP is bound by residues 87 to 95 (LGWGHFSTV) and K110. The Proton acceptor role is filled by D214. Disordered stretches follow at residues 235–299 (PATT…SSPF) and 316–341 (ISLR…SLIL). The segment covering 237 to 254 (TTSSPTSNTSSSKTRNNT) has biased composition (low complexity). 2 stretches are compositionally biased toward polar residues: residues 281 to 299 (KNPT…SSPF) and 327 to 337 (HPNSPFSSGDN).

The protein belongs to the protein kinase superfamily. Ser/Thr protein kinase family. Post-translationally, phosphorylated on Ser residue(s).

It localises to the cytoplasm. Its subcellular location is the nucleus. The enzyme catalyses L-seryl-[protein] + ATP = O-phospho-L-seryl-[protein] + ADP + H(+). It carries out the reaction L-threonyl-[protein] + ATP = O-phospho-L-threonyl-[protein] + ADP + H(+). In terms of biological role, may play an important role in mitotic control by altering cellular location, degree of phosphorylation and kinase activity. Abundant expression accelerates the exit when cells are in M-phase and also delays the entry into mitosis when cells are in G2. Phosphorylates prp2 in vitro and so may have a role in co-ordinating pre-mRNA splicing with the progression of the cell division cycle. The chain is Protein kinase dsk1 (dsk1) from Schizosaccharomyces pombe (strain 972 / ATCC 24843) (Fission yeast).